The chain runs to 568 residues: Transport inhibitor response 1-like protein Os11g0515500 (568 aa).

The 45-residue stretch at 1-45 folds into the F-box domain; sequence MVFFPEEVVEHILGFLASHRDRNAVSLVCREWYRVERLSRRSVLV. 1D-myo-inositol hexakisphosphate contacts are provided by residues K69, 103–104, and R335; that span reads KR. The tract at residues 338–343 is interaction with auxin-responsive proteins; that stretch reads PANANA. Position 390–392 (390–392) interacts with 1D-myo-inositol hexakisphosphate; the sequence is SFR. Residues 394–398 form an interaction with auxin-responsive proteins region; the sequence is CVLDP. R425 contacts 1D-myo-inositol hexakisphosphate. Residues 453–454 form an interaction with auxin-responsive proteins region; sequence AF. 1D-myo-inositol hexakisphosphate is bound by residues 473 to 474 and R498; that span reads KK.

In terms of assembly, part of a SCF (SKP1-cullin-F-box) protein ligase complex. May interact with auxin and auxin-responsive proteins.

The protein resides in the nucleus. It participates in protein modification; protein ubiquitination. The polypeptide is Transport inhibitor response 1-like protein Os11g0515500 (Oryza sativa subsp. japonica (Rice)).